The following is a 76-amino-acid chain: RNA-binding protein KhpA (76 aa).

The KH domain occupies 30 to 76; the sequence is GEVLEVRVNPEDLGRVIGRSGRTAKALRTLVTALADGRRVRVDVVDD.

Belongs to the KhpA RNA-binding protein family.

The protein localises to the cytoplasm. In terms of biological role, a probable RNA-binding protein. The polypeptide is RNA-binding protein KhpA (Leifsonia xyli subsp. xyli (strain CTCB07)).